Consider the following 295-residue polypeptide: Excinuclease cho (295 aa).

Residues 33-108 (TRPGVYLFHG…IKEQQPLFNK (76 aa)) form the GIY-YIG domain.

Functionally, incises the DNA at the 3' side of a lesion during nucleotide excision repair. Incises the DNA farther away from the lesion than UvrC. Not able to incise the 5' site of a lesion. When a lesion remains because UvrC is not able to induce the 3' incision, Cho incises the DNA. Then UvrC makes the 5' incision. The combined action of Cho and UvrC broadens the substrate range of nucleotide excision repair. The protein is Excinuclease cho (cho) of Shigella flexneri.